Consider the following 564-residue polypeptide: 60 kDa lysophospholipase (564 aa).

Residues arginine 9–aspartate 355 enclose the Asparaginase/glutaminase domain. Threonine 19 serves as the catalytic Acyl-ester intermediate. An asparaginase region spans residues threonine 41–lysine 350. Residues aspartate 84–serine 86 and threonine 116–aspartate 117 contribute to the substrate site. ANK repeat units follow at residues glycine 141–proline 170, valine 396–leucine 426, serine 430–alanine 459, aspartate 463–proline 492, and aspartate 530–alanine 559. Serine 478 is subject to Phosphoserine.

In the N-terminal section; belongs to the asparaginase 1 family. As to quaternary structure, monomer.

It catalyses the reaction a 1-acyl-sn-glycero-3-phosphocholine + H2O = sn-glycerol 3-phosphocholine + a fatty acid + H(+). The catalysed reaction is L-asparagine + H2O = L-aspartate + NH4(+). It carries out the reaction a 1-O-alkyl-2-acetyl-sn-glycero-3-phosphocholine + H2O = a 1-O-alkyl-sn-glycero-3-phosphocholine + acetate + H(+). The enzyme catalyses 1-hexadecanoyl-sn-glycero-3-phosphocholine + H2O = sn-glycerol 3-phosphocholine + hexadecanoate + H(+). It catalyses the reaction 2 1-hexadecanoyl-sn-glycero-3-phosphocholine = 1,2-dihexadecanoyl-sn-glycero-3-phosphocholine + sn-glycerol 3-phosphocholine. The catalysed reaction is 1-octadecanoyl-sn-glycero-3-phosphocholine + H2O = octadecanoate + sn-glycerol 3-phosphocholine + H(+). It carries out the reaction 1-(9Z-octadecenoyl)-sn-glycero-3-phosphocholine + H2O = sn-glycerol 3-phosphocholine + (9Z)-octadecenoate + H(+). The enzyme catalyses 1-hexadecanoyl-sn-glycero-3-phosphoethanolamine + H2O = sn-glycero-3-phosphoethanolamine + hexadecanoate + H(+). It catalyses the reaction 1-(9Z-octadecenoyl)-sn-glycero-3-phosphoethanolamine + H2O = sn-glycero-3-phosphoethanolamine + (9Z)-octadecenoate + H(+). The catalysed reaction is 1-hexadecanoyl-sn-glycero-3-phosphoethanolamine + 1-hexadecanoyl-sn-glycero-3-phosphocholine = 1,2-dihexadecanoyl-sn-glycero-3-phosphoethanolamine + sn-glycerol 3-phosphocholine. It carries out the reaction 2-(5Z,8Z,11Z,14Z)-eicosatetraenoyl-sn-glycero-3-phosphocholine + H2O = sn-glycerol 3-phosphocholine + (5Z,8Z,11Z,14Z)-eicosatetraenoate + H(+). The enzyme catalyses 2-hexadecanoyl-sn-glycero-3-phosphocholine + H2O = sn-glycerol 3-phosphocholine + hexadecanoate + H(+). It catalyses the reaction 2 2-hexadecanoyl-sn-glycero-3-phosphocholine = 1,2-dihexadecanoyl-sn-glycero-3-phosphocholine + sn-glycerol 3-phosphocholine. The catalysed reaction is 1-O-(9Z)-octadecenoyl-2-O-acetyl-sn-glycero-3-phosphocholine + H2O = 2-acetyl-sn-glycero-3-phosphocholine + (9Z)-octadecenoate + H(+). It carries out the reaction a 1-acyl-sn-glycero-3-phospho-(1D-myo-inositol) + 1-hexadecanoyl-sn-glycero-3-phosphocholine = a 1-acyl-2-hexadecanoyl-sn-glycero-3-phospho-(1D-myo-inositol) + sn-glycerol 3-phosphocholine. The enzyme catalyses 2 2-(5Z,8Z,11Z,14Z)-eicosatetraenoyl-sn-glycero-3-phosphocholine = 1,2-di-(5Z,8Z,11Z,14Z-eicosatetraenoyl)-sn-glycero-3-phosphocholine + sn-glycerol 3-phosphocholine. Its function is as follows. Exhibits lysophospholipase, transacylase, PAF acetylhydrolase and asparaginase activities. Can catalyze three types of transacylation reactions: (1) acyl transfer from 1-acyl-sn-glycero-3-phosphocholine (1-acyl-GPC) to the sn-1(3) positions of glycerol and 2-acylglycerol (sn-1 to -1(3) transfer), (2) acyl transfer from 1-acyl-GPC to the sn-2 positions of 1-acyl-GPC, 1-acyl-sn-glycero-3-phosphoethanolamine (1-acyl-GPE), and other lysophospholipids (sn-1 to -2 transfer) and (3) acyl transfer from 2-acyl-GPC to the sn-1 position of 2-acyl-GPC and 2-acyl-GPE (sn-2 to -1 transfer). Mediates the synthesis of 1-arachidonoyl species of phospholipids by transferring the arachidonoyl residue from 2-arachidonoyl lysophospholipid to the sn-1 position of 2-acyl lysophospholipid. In Mus musculus (Mouse), this protein is 60 kDa lysophospholipase (Aspg).